The primary structure comprises 313 residues: Protein FixB (313 aa).

255-283 (LYLAVGISGQIQHMVGANASQTIFAINKD) contributes to the FAD binding site.

The protein belongs to the ETF alpha-subunit/FixB family. In terms of assembly, heterodimer of FixA and FixB.

Its pathway is amine and polyamine metabolism; carnitine metabolism. Functionally, required for anaerobic carnitine reduction. May bring reductant to CaiA. In Escherichia coli (strain K12 / MC4100 / BW2952), this protein is Protein FixB.